The sequence spans 1185 residues: Pyruvate carboxylase (1185 aa).

In terms of domain architecture, Biotin carboxylation spans 32–484 (KFTKVLVANR…WTTFIDDTPE (453 aa)). Lys150, Glu234, and His269 together coordinate ATP. The 198-residue stretch at 154 to 351 (RAIAIRCGVP…IVSAQLHVAA (198 aa)) folds into the ATP-grasp domain. The active site involves Arg326. Residues 570-838 (GLIMDTTWRD…QLEFDNNQLR (269 aa)) form the Pyruvate carboxyltransferase domain. Residues 578–582 (RDAHQ) and Arg651 contribute to the substrate site. Residue Asp579 participates in a divalent metal cation binding. Positions 747, 777, and 779 each coordinate a divalent metal cation. Lys747 is subject to N6-carboxylysine. Thr912 provides a ligand contact to substrate. One can recognise a Biotinyl-binding domain in the interval 1108–1183 (RADPGNPGHV…NGGDLCAVLE (76 aa)). N6-biotinyllysine is present on Lys1149.

It depends on biotin as a cofactor. Zn(2+) is required as a cofactor.

It localises to the cytoplasm. The enzyme catalyses hydrogencarbonate + pyruvate + ATP = oxaloacetate + ADP + phosphate + H(+). It participates in carbohydrate biosynthesis; gluconeogenesis. Pyruvate carboxylase catalyzes a 2-step reaction, involving the ATP-dependent carboxylation of the covalently attached biotin in the first step and the transfer of the carboxyl group to pyruvate in the second. This chain is Pyruvate carboxylase (pyr1), found in Schizosaccharomyces pombe (strain 972 / ATCC 24843) (Fission yeast).